The following is a 463-amino-acid chain: A-type ATP synthase subunit B (463 aa).

Belongs to the ATPase alpha/beta chains family. As to quaternary structure, has multiple subunits with at least A(3), B(3), C, D, E, F, H, I and proteolipid K(x).

The protein resides in the cell membrane. Its function is as follows. Component of the A-type ATP synthase that produces ATP from ADP in the presence of a proton gradient across the membrane. The B chain is a regulatory subunit. The polypeptide is A-type ATP synthase subunit B (Thermococcus sp. (strain KI)).